A 252-amino-acid polypeptide reads, in one-letter code: Insulin-induced gene 1 protein (252 aa).

Residues 1 to 59 (MPRLESGAWSCSCAARARHAARPGEAAPKADAMQSPSPSAGRAEREASGGSATTWRQHL) are Cytoplasmic-facing. Residues 22–48 (RPGEAAPKADAMQSPSPSAGRAEREAS) are disordered. A helical transmembrane segment spans residues 60 to 82 (VQRSVVLFVVGAFMALVLNLLQI). Residues 83–101 (QRNVTLFPDEVIATLFSSA) are Extracellular-facing. A helical membrane pass occupies residues 102–119 (WWVPPCCGTAAAVVGLLY). Over 120–134 (PCIDSHLGEPHKFKR) the chain is Cytoplasmic. A helical transmembrane segment spans residues 135–157 (EWASVMRCIAVFVGINHASAKLD). Residues 158 to 160 (FAN) are Extracellular-facing. The chain crosses the membrane as a helical span at residues 161–179 (NVQLSLTLAALSLGLWWTF). Over 180-184 (DRSRS) the chain is Cytoplasmic. Residues 185–206 (GLGLGITIAFVATLITQFLVYN) traverse the membrane as a helical segment. The Extracellular portion of the chain corresponds to 207 to 220 (GVYQYTSPDFLYIR). Residues 221–238 (SWLPCIFFSGGVTVGNIG) form a helical membrane-spanning segment. At 239 to 252 (RQLAMGIPEKPHND) the chain is on the cytoplasmic side. A KxHxx motif is present at residues 246–252 (PEKPHND).

It belongs to the INSIG family. In terms of assembly, interacts with SCAP; interaction is direct and only takes place in the presence of sterols; it prevents interaction between SCAP and the coat protein complex II (COPII). Associates with the SCAP-SREBP complex; association is mediated via its interaction with SCAP and only takes place in the presence of sterols.

Its subcellular location is the endoplasmic reticulum membrane. Oxysterol-binding protein that mediates feedback control of cholesterol synthesis by controlling both endoplasmic reticulum to Golgi transport of SCAP and degradation of HMGCR. Acts as a negative regulator of cholesterol biosynthesis by mediating the retention of the SCAP-SREBP complex in the endoplasmic reticulum, thereby blocking the processing of sterol regulatory element-binding proteins (SREBPs). Binds oxysterol, including 25-hydroxycholesterol, regulating interaction with SCAP and retention of the SCAP-SREBP complex in the endoplasmic reticulum. In presence of oxysterol, interacts with SCAP, retaining the SCAP-SREBP complex in the endoplasmic reticulum, thereby preventing SCAP from escorting SREBPs to the Golgi. Sterol deprivation reduces oxysterol-binding, disrupting the interaction between INSIG1 and SCAP, thereby promoting Golgi transport of the SCAP-SREBP complex, followed by processing and nuclear translocation of SREBPs. Also regulates cholesterol synthesis by regulating degradation of HMGCR. The protein is Insulin-induced gene 1 protein of Gallus gallus (Chicken).